The following is a 270-amino-acid chain: Karrikin insensitive 2 receptor CA (270 aa).

Catalysis depends on S95, which acts as the Nucleophile. Residues D217 and H246 contribute to the active site.

It belongs to the AB hydrolase superfamily. Expressed in stigma.

It is found in the nucleus. It localises to the cytoplasm. Functionally, hydrolase which may be involved in plant olfaction during volatile communication. In Petunia hybrida (Petunia), this protein is Karrikin insensitive 2 receptor CA.